Here is a 162-residue protein sequence, read N- to C-terminus: uncharacterized protein (162 aa).

A signal peptide spans 1–24; it reads MCKRFKFLLAVSALFISITVVLAG. Cysteine 25 is lipidated: N-palmitoyl cysteine. Cysteine 25 carries S-diacylglycerol cysteine lipidation.

The protein resides in the cell membrane. This is an uncharacterized protein from Bacillus anthracis.